Consider the following 230-residue polypeptide: MKRGKKYLASLQMFDVKKTYPLQEAISLAKQTQVAKFDAAVECAFHLNLDPKKVDQNLRGALVLPHGTGKVLKVAVLAKGEQAKQAQEAQADYVGDQDLIDKIAKNWFDFDVLVATPEMMPQLSKLGRLLGPKGLMPNPKTGTVTNDVLQAVKEIKNGKIEYRLDKSGNIHAILGKVSFDETKLLENLKTLYLQLMAVKPRTVKGTYIKSVTISTTMAPGIKIDPVTISQ.

It belongs to the universal ribosomal protein uL1 family. In terms of assembly, part of the 50S ribosomal subunit.

Its function is as follows. Binds directly to 23S rRNA. The L1 stalk is quite mobile in the ribosome, and is involved in E site tRNA release. In terms of biological role, protein L1 is also a translational repressor protein, it controls the translation of the L11 operon by binding to its mRNA. This chain is Large ribosomal subunit protein uL1, found in Onion yellows phytoplasma (strain OY-M).